The sequence spans 161 residues: 3-isopropylmalate dehydratase small subunit (161 aa).

Belongs to the LeuD family. LeuD type 2 subfamily. In terms of assembly, heterodimer of LeuC and LeuD.

The catalysed reaction is (2R,3S)-3-isopropylmalate = (2S)-2-isopropylmalate. Its pathway is amino-acid biosynthesis; L-leucine biosynthesis; L-leucine from 3-methyl-2-oxobutanoate: step 2/4. In terms of biological role, catalyzes the isomerization between 2-isopropylmalate and 3-isopropylmalate, via the formation of 2-isopropylmaleate. In Clostridium botulinum (strain Eklund 17B / Type B), this protein is 3-isopropylmalate dehydratase small subunit.